The following is a 248-amino-acid chain: NADP-dependent 3-hydroxy acid dehydrogenase YdfG (248 aa).

Residues 7–12 (GATAGF), 32–33 (RR), 54–55 (DV), and Asn-81 contribute to the NADP(+) site. Residue Ser-134 coordinates substrate. NADP(+) is bound by residues Tyr-147, Lys-151, and 177 to 185 (PGLVGGTEF). Tyr-147 serves as the catalytic Proton acceptor.

Belongs to the short-chain dehydrogenases/reductases (SDR) family. In terms of assembly, homotetramer.

It carries out the reaction 3-hydroxypropanoate + NADP(+) = 3-oxopropanoate + NADPH + H(+). The enzyme catalyses L-allo-threonine + NADP(+) = aminoacetone + CO2 + NADPH. In terms of biological role, NADP-dependent dehydrogenase with broad substrate specificity acting on 3-hydroxy acids. Catalyzes the NADP-dependent oxidation of L-allo-threonine to L-2-amino-3-keto-butyrate, which is spontaneously decarboxylated into aminoacetone. Also acts on D-threonine, L-serine, D-serine, D-3-hydroxyisobutyrate, L-3-hydroxyisobutyrate, D-glycerate and L-glycerate. Able to catalyze the reduction of the malonic semialdehyde to 3-hydroxypropionic acid. YdfG is apparently supplementing RutE, the presumed malonic semialdehyde reductase involved in pyrimidine degradation since both are able to detoxify malonic semialdehyde. This is NADP-dependent 3-hydroxy acid dehydrogenase YdfG from Escherichia coli (strain K12).